The sequence spans 134 residues: Small ribosomal subunit protein uS8c (134 aa).

It belongs to the universal ribosomal protein uS8 family. Part of the 30S ribosomal subunit.

It is found in the plastid. It localises to the chloroplast. One of the primary rRNA binding proteins, it binds directly to 16S rRNA central domain where it helps coordinate assembly of the platform of the 30S subunit. This is Small ribosomal subunit protein uS8c (rps8) from Eucalyptus globulus subsp. globulus (Tasmanian blue gum).